The primary structure comprises 1165 residues: Pesticidal crystal protein Cry1Da (1165 aa).

It belongs to the delta endotoxin family.

In terms of biological role, promotes colloidosmotic lysis by binding to the midgut epithelial cells of many lepidopteran larvae. The sequence is that of Pesticidal crystal protein Cry1Da (cry1Da) from Bacillus thuringiensis subsp. aizawai.